Consider the following 370-residue polypeptide: DNA replication and repair protein RecF (370 aa).

30-37 (GPNGSGKT) contacts ATP.

Belongs to the RecF family.

It is found in the cytoplasm. In terms of biological role, the RecF protein is involved in DNA metabolism; it is required for DNA replication and normal SOS inducibility. RecF binds preferentially to single-stranded, linear DNA. It also seems to bind ATP. The chain is DNA replication and repair protein RecF from Prosthecochloris aestuarii (strain DSM 271 / SK 413).